Reading from the N-terminus, the 578-residue chain is GRAM domain-containing protein 4 (578 aa).

Disordered stretches follow at residues 23 to 58 (ESPN…AGPG) and 136 to 159 (TEEQ…ERRS). 2 positions are modified to phosphoserine: S24 and S28. The span at 44–53 (SPRDSEELRD) shows a compositional bias: basic and acidic residues. A coiled-coil region spans residues 83–143 (HLEIALLEKH…ARTEEQMAQQ (61 aa)). 3 consecutive transmembrane segments (helical) span residues 240–260 (VYMN…LAIL), 334–354 (ITQK…FFPY), and 356–376 (LVGL…DFIF). The interval 415-435 (QTTSSRSYVPSAPAGLGKEED) is disordered. The GRAM domain maps to 445–523 (GNFHEIFNLT…VDITDIQKYK (79 aa)).

Interacts with RTN4 (isoform B). As to expression, expressed in lung and in primary lung squamous cell carcinoma (LSCC).

The protein resides in the mitochondrion membrane. Its subcellular location is the endoplasmic reticulum membrane. Its function is as follows. Plays a role as a mediator of E2F1-induced apoptosis in the absence of p53/TP53. Plays a role as a mediator of E2F1-induced apoptosis in the absence of p53/TP53. Inhibits TLR9 response to nucelic acids and regulates TLR9-mediated innate immune response. This is GRAM domain-containing protein 4 from Homo sapiens (Human).